A 296-amino-acid chain; its full sequence is MIFAVVDILEISIQLLCILLFGTTVINCVSKGRHKDVNAIVRETESKKIVPWSDAKVQIKKFLGDGASGTAYLVVWEDKEVVMKVTGIHPQSISVLHDELLITQKIGKLSKSCHNFLPYHGSIVISDLPAKMMRNSECVNHLAIFMGYGGTVLADWRTSDYRRCITIMAQLVLAMRIANDKMKFVHGDIYMMNILIAPTTKRWIEYNIDGKTITIQTFGIIPQLIDFSKSWCGADPERHDISRLHTVAKRVGHSLNGSKRDKKKVRQAVKMVGAAKNWKNLCLYRQLFKQVIVHDH.

Residues 1 to 21 (MIFAVVDILEISIQLLCILLF) traverse the membrane as a helical segment.

The protein localises to the membrane. This is an uncharacterized protein from Caenorhabditis elegans.